The chain runs to 726 residues: MKKKNLITAALPYVNNIPHLGNLVQVLSADAFARYSRMMGIETLYVCGTDEYGTATETKALIEKTTPEELCNKYHAIHKSIYEWFNIKFDIFGRTTNKYHKETVQDLFLKLDKNGYITEKENEQFFCQQDKMFLADRYVTGECPNCGNNTKGDQCENCSNLLVTNELLNPRCIICKNIPIIKKTKHLYIDLPKIKNELEHWIQQIDQNTNWNTNAIKITNAFLRDGLKERTITRDLKWGIPVPKKEYENKVFYVWFDAPIGYISITKEIIKDWESWWKNNEDTNLIQFIGKDNILFHTIMFPSIELGSQENWTMLNKLASSEYLNYENLKFSKSAGTGIFGNDVITTGIPSDVWRFYIYYNRPEKADFQFMWDDFMERINSELIGNFSNLINRVLTFYKKFFGDKIDKIELNENFWQIVNIKYERTINFFKQIELKAALKEILDISRIGNKIFQDKEPWKTKNSTPQTTKELLLNLIYLIRDLSILISPFMPHTSDRIRSFFGKSYEISNKFLGTNLGLTTIQSTEVLFTKIEKQLIDSLKLKYSGRTNMQDEQNKNSINLFSEQICLKTVKIKTIDRNPDAEKLFILKLDDGTPEGKQIVSSIADHYTEEELIGKHIIIVDNLKPAKFRGIRSEGMLIATEDENKNFKIIIVEDFKDNPIPGERVILESDTGKELKSPTKINIDKFLQAQIVAENGELKINGINLILEHSKEKVLSKEIPNGKIY.

Residues 12–22 (PYVNNIPHLGN) carry the 'HIGH' region motif. Zn(2+)-binding residues include Cys143, Cys146, Cys155, and Cys158. A 'KMSKS' region motif is present at residues 330–334 (KFSKS). Lys333 contacts ATP. Positions 562–667 (FSEQICLKTV…DNPIPGERVI (106 aa)) constitute a tRNA-binding domain.

This sequence belongs to the class-I aminoacyl-tRNA synthetase family. MetG type 1 subfamily. Homodimer. Requires Zn(2+) as cofactor.

It is found in the cytoplasm. It carries out the reaction tRNA(Met) + L-methionine + ATP = L-methionyl-tRNA(Met) + AMP + diphosphate. In terms of biological role, is required not only for elongation of protein synthesis but also for the initiation of all mRNA translation through initiator tRNA(fMet) aminoacylation. This Borrelia duttonii (strain Ly) protein is Methionine--tRNA ligase.